The following is a 197-amino-acid chain: Adenylyl-sulfate kinase (197 aa).

An ATP-binding site is contributed by 33–40 (GLSGSGKS). The active-site Phosphoserine intermediate is Ser107.

The protein belongs to the APS kinase family.

The catalysed reaction is adenosine 5'-phosphosulfate + ATP = 3'-phosphoadenylyl sulfate + ADP + H(+). It functions in the pathway sulfur metabolism; hydrogen sulfide biosynthesis; sulfite from sulfate: step 2/3. In terms of biological role, catalyzes the synthesis of activated sulfate. This chain is Adenylyl-sulfate kinase, found in Bacillus pumilus (strain SAFR-032).